The following is a 207-amino-acid chain: MGCSSSTERLTSTKNINIVTSPAQQQKKNAQDTKVKIVLLGDSGVGKSSIALYLCHGRFSEKHQVTIGAAFLHHNIELKNGATMKLHIWDTGGQERFRSMAPLYYRDAYGAVVVYDSNNVESFDSLKYWINEIKSNGPRNCCIMVVANKKDLPQKLNSEMVMKFCEQENVSFIECSAKTGENITTLFEKLASRIYSRFKEVLYYNNP.

Gly2 is lipidated: N-myristoyl glycine. Residues 41 to 49, 60 to 66, 90 to 94, 148 to 151, and 176 to 178 each bind GTP; these read GDSGVGKSS, SEKHQVT, DTGGQ, NKKD, and SAK. Residues 63–71 carry the Effector region motif; the sequence is HQVTIGAAF.

The protein belongs to the small GTPase superfamily. Rab family. Interacts with CK1. May interact with ARF1. In terms of processing, myristoylation is required for cell membrane and food vacuole membrane localization. Post-translationally, may be palmitoylated on Cys-3. Lacks the C-terminal cysteine motifs subject to isoprenylation present in mammalian RAB5B homolog.

It localises to the cell membrane. Its subcellular location is the vacuole membrane. It is found in the vesicle. The enzyme catalyses GTP + H2O = GDP + phosphate + H(+). Its activity is regulated as follows. Alternates between an inactive GDP-bound form and an active GTP-bound form. Activated by guanine nucleotide-exchange factors (GEFs) and inactivated by GTPase-activating proteins (GAPs). In terms of biological role, small GTPase which regulates vesicle trafficking between organelles. May be involved in the trafficking of the N-myristoylated AK2 from the endoplasmic reticulum to the parasitophorous vacuole membrane. The polypeptide is Ras-related protein Rab-5B (Plasmodium falciparum (isolate 3D7)).